A 502-amino-acid polypeptide reads, in one-letter code: Maturase K (502 aa).

This sequence belongs to the intron maturase 2 family. MatK subfamily.

Its subcellular location is the plastid. It is found in the chloroplast. Its function is as follows. Usually encoded in the trnK tRNA gene intron. Probably assists in splicing its own and other chloroplast group II introns. This Fremontodendron californicum (California flannelbush) protein is Maturase K.